Here is a 174-residue protein sequence, read N- to C-terminus: Crossover junction endodeoxyribonuclease RuvC (174 aa).

Active-site residues include Asp8, Glu67, and Asp139. Residues Asp8, Glu67, and Asp139 each coordinate Mg(2+).

This sequence belongs to the RuvC family. As to quaternary structure, homodimer which binds Holliday junction (HJ) DNA. The HJ becomes 2-fold symmetrical on binding to RuvC with unstacked arms; it has a different conformation from HJ DNA in complex with RuvA. In the full resolvosome a probable DNA-RuvA(4)-RuvB(12)-RuvC(2) complex forms which resolves the HJ. Mg(2+) serves as cofactor.

The protein resides in the cytoplasm. It catalyses the reaction Endonucleolytic cleavage at a junction such as a reciprocal single-stranded crossover between two homologous DNA duplexes (Holliday junction).. In terms of biological role, the RuvA-RuvB-RuvC complex processes Holliday junction (HJ) DNA during genetic recombination and DNA repair. Endonuclease that resolves HJ intermediates. Cleaves cruciform DNA by making single-stranded nicks across the HJ at symmetrical positions within the homologous arms, yielding a 5'-phosphate and a 3'-hydroxyl group; requires a central core of homology in the junction. The consensus cleavage sequence is 5'-(A/T)TT(C/G)-3'. Cleavage occurs on the 3'-side of the TT dinucleotide at the point of strand exchange. HJ branch migration catalyzed by RuvA-RuvB allows RuvC to scan DNA until it finds its consensus sequence, where it cleaves and resolves the cruciform DNA. The sequence is that of Crossover junction endodeoxyribonuclease RuvC from Pseudomonas putida (strain GB-1).